Consider the following 243-residue polypeptide: NEDD4-binding protein 2-like 1 (243 aa).

The tract at residues 1 to 38 (MEDSFLQSFGRLSLQPQQQQQRQRPPRPPPRGTPPRRH) is disordered.

Interacts with dynactin subunit proteins, including DCTN4, DCTN5 and DCTN5.

Its function is as follows. Might play a role in adipocyte differentiation and triglyceride accumulation. The sequence is that of NEDD4-binding protein 2-like 1 (N4BP2L1) from Homo sapiens (Human).